The primary structure comprises 238 residues: Leucyl/phenylalanyl-tRNA--protein transferase (238 aa).

This sequence belongs to the L/F-transferase family.

It localises to the cytoplasm. It catalyses the reaction N-terminal L-lysyl-[protein] + L-leucyl-tRNA(Leu) = N-terminal L-leucyl-L-lysyl-[protein] + tRNA(Leu) + H(+). It carries out the reaction N-terminal L-arginyl-[protein] + L-leucyl-tRNA(Leu) = N-terminal L-leucyl-L-arginyl-[protein] + tRNA(Leu) + H(+). The catalysed reaction is L-phenylalanyl-tRNA(Phe) + an N-terminal L-alpha-aminoacyl-[protein] = an N-terminal L-phenylalanyl-L-alpha-aminoacyl-[protein] + tRNA(Phe). Functions in the N-end rule pathway of protein degradation where it conjugates Leu, Phe and, less efficiently, Met from aminoacyl-tRNAs to the N-termini of proteins containing an N-terminal arginine or lysine. This Pseudoalteromonas translucida (strain TAC 125) protein is Leucyl/phenylalanyl-tRNA--protein transferase.